We begin with the raw amino-acid sequence, 245 residues long: DNA polymerase zeta processivity subunit (245 aa).

One can recognise an HORMA domain in the interval 3 to 203 (RWVEKWLRVY…PPKIKLTSLV (201 aa)).

The protein belongs to the MAD2 family. Forms DNA polymerase zeta with REV3. Interacts with REV1.

Its subcellular location is the mitochondrion. Required for DNA damage induced mutagenesis. Involved in DNA repair, mitochondrial DNA repair and translesion synthesis. Has a role in the bypass of abasic (AP) sites. The polypeptide is DNA polymerase zeta processivity subunit (REV7) (Saccharomyces cerevisiae (strain ATCC 204508 / S288c) (Baker's yeast)).